The chain runs to 297 residues: Homoserine kinase (297 aa).

Residue 82-92 participates in ATP binding; that stretch reads PVSRGLGSSAA.

This sequence belongs to the GHMP kinase family. Homoserine kinase subfamily.

It localises to the cytoplasm. The enzyme catalyses L-homoserine + ATP = O-phospho-L-homoserine + ADP + H(+). It participates in amino-acid biosynthesis; L-threonine biosynthesis; L-threonine from L-aspartate: step 4/5. Catalyzes the ATP-dependent phosphorylation of L-homoserine to L-homoserine phosphate. The polypeptide is Homoserine kinase (Clostridium botulinum (strain Loch Maree / Type A3)).